A 689-amino-acid chain; its full sequence is Glycine--tRNA ligase beta subunit (689 aa).

It belongs to the class-II aminoacyl-tRNA synthetase family. As to quaternary structure, tetramer of two alpha and two beta subunits.

It is found in the cytoplasm. The catalysed reaction is tRNA(Gly) + glycine + ATP = glycyl-tRNA(Gly) + AMP + diphosphate. The sequence is that of Glycine--tRNA ligase beta subunit from Mannheimia succiniciproducens (strain KCTC 0769BP / MBEL55E).